The primary structure comprises 499 residues: ADP,ATP carrier protein 5 (499 aa).

Helical transmembrane passes span 25–45 (LGKF…QNIL), 61–81 (IAGF…VIIY), 93–113 (IFYY…FVIY), 148–168 (YIVY…LLFW), 183–203 (FYTF…FLMM), 223–243 (ITLV…CCVL), 286–306 (LWLL…VEAV), 327–347 (LYIL…NNVM), 356–376 (AVIS…LIVF), 380–400 (ILSL…VSIG), and 468–488 (SISP…IYAV).

Belongs to the ADP/ATP translocase tlc family.

Its subcellular location is the cell membrane. Provides the rickettsial cell with host ATP in exchange for rickettsial ADP. This is an obligate exchange system. This energy acquiring activity is an important component of rickettsial parasitism. The chain is ADP,ATP carrier protein 5 (tlcE) from Rickettsia felis (strain ATCC VR-1525 / URRWXCal2) (Rickettsia azadi).